The following is a 100-amino-acid chain: Large ribosomal subunit protein uL23 (100 aa).

It belongs to the universal ribosomal protein uL23 family. As to quaternary structure, part of the 50S ribosomal subunit. Contacts protein L29, and trigger factor when it is bound to the ribosome.

One of the early assembly proteins it binds 23S rRNA. One of the proteins that surrounds the polypeptide exit tunnel on the outside of the ribosome. Forms the main docking site for trigger factor binding to the ribosome. This chain is Large ribosomal subunit protein uL23, found in Vibrio vulnificus (strain CMCP6).